The following is a 2286-amino-acid chain: Non-reducing polyketide synthase fsr1 (2286 aa).

An N-terminal acylcarrier protein transacylase domain (SAT) region spans residues 7 to 342 (LYLFGDQTFD…IYTALKKTSL (336 aa)). The region spanning 368-805 (KPKLAIVAMS…GGNSALLIQD (438 aa)) is the Ketosynthase family 3 (KS3) domain. Catalysis depends on for beta-ketoacyl synthase activity residues C540, H675, and H722. The interval 905–1195 (VFTFTGQGAQ…GMVKPTLGQQ (291 aa)) is acyl/malonyl transferases. Catalysis depends on S996, which acts as the For acyl/malonyl transferase activity. Residues 1285 to 1417 (HSVVEESGDS…CVVLFKDRSH (133 aa)) form an N-terminal hotdog fold region. In terms of domain architecture, PKS/mFAS DH spans 1285 to 1591 (HSVVEESGDS…IQGVPRRVLK (307 aa)). The tract at residues 1296-1588 (KTGIVVEADI…QIAIQGVPRR (293 aa)) is product template (PT) domainn. Catalysis depends on H1317, which acts as the Proton acceptor; for dehydratase activity. Positions 1444–1591 (SARFNRPMAY…IQGVPRRVLK (148 aa)) are C-terminal hotdog fold. D1504 acts as the Proton donor; for dehydratase activity in catalysis. The segment at 1600 to 1639 (KKGQPQRQTQDKPRNTPSQTKDSTPKPAQNKPAAKVEPPK) is disordered. A Carrier 1 domain is found at 1637 to 1712 (PPKFSTAIRI…DLRAFLGADE (76 aa)). S1671 is modified (O-(pantetheine 4'-phosphoryl)serine). The segment at 1716 to 1735 (ESSSSAASDSGRDTTTTGSA) is disordered. The 76-residue stretch at 1748-1823 (EVEFERALEI…DLKTMLAREM (76 aa)) folds into the Carrier 2 domain. S1782 carries the O-(pantetheine 4'-phosphoryl)serine modification. Positions 1897 to 2145 (VTGASGGLGS…NWTPVNDIAD (249 aa)) are reductase (R) domain.

It functions in the pathway polyketide biosynthesis. Functionally, non-reducing polyketide synthase; part of the gene cluster that mediates the biosynthesis of fusarubins, highly pigmented naphthoquinones responsible for the coloration of the fruiting bodies. The non-reducing polyketide synthase FSR1 is responsible for the condensation of seven acetyl-CoA units to yield a haptaketide. After rings A and B are formed by aldol-type cyclization, the PKS-derived product is released as 6-O-demethylfusarubinaldehyde. Then, two hydroxyl groups at C-5 and C-10 are incorporated by FSR3, and simultaneously hydroxyl groups at C-6 and C-8 are methylated by FSR2. The aldehyde is, on the one hand, reduced by FSR3 to 8-O-methylfusarubin alcohol, which equilibrates mainly with 8-O-methylfusarubin and only small amounts of 8-O-methylnectriafurone. On the other hand, the aldehyde can be oxidized to form 8-O-methylfusarubinic acid, a reaction driven by FSR3 equilibrating with 8-O-methylfusarubinlactone, finally resulting in 8-O-methylanhydrofusarubinlactol after a further reduction step and loss of water. 8-O-Methylfusarubinic acid can also undergo decarboxylation, resulting in 8-O-methyl-13-hydroxynorjavanicin after another hydroxylation step at C-13. Both steps are most likely also accomplished by FSR3. No enzymatic function has been determined so far for either FSR4 and FSR5. Their deletion does not alter the product spectrum, but the possibility that they catalyze specific enzymatic steps during perithecium development cannot be ruled out. FSR4 might possess a regulatory function in the biosynthesis of fusarubins. This chain is Non-reducing polyketide synthase fsr1, found in Gibberella fujikuroi (strain CBS 195.34 / IMI 58289 / NRRL A-6831) (Bakanae and foot rot disease fungus).